The following is a 408-amino-acid chain: Multidrug resistance protein MdtG (408 aa).

11 helical membrane-spanning segments follow: residues 16–36, 58–78, 92–112, 115–135, 146–166, 173–193, 224–244, 256–276, 290–310, 319–339, and 378–398; these read LIVA…VMPF, IVFS…GGLA, LGMG…QFLI, ALLG…ATQV, TLST…GLLA, PVFF…LFCI, LFVT…ILTL, VAFI…LSAP, ILIT…YVQT, FLLG…LVYN, and AVFL…WNSL.

The protein belongs to the major facilitator superfamily. DHA1 family. MdtG (TC 2.A.1.2.20) subfamily.

It localises to the cell inner membrane. Its function is as follows. Confers resistance to fosfomycin and deoxycholate. The sequence is that of Multidrug resistance protein MdtG from Escherichia coli O127:H6 (strain E2348/69 / EPEC).